Here is a 204-residue protein sequence, read N- to C-terminus: COBRA-like protein 5 (204 aa).

Residues 1–24 form the signal peptide; it reads MESLFSTMIVLLLVSFSCLISTEA. Asparagine 31 and asparagine 195 each carry an N-linked (GlcNAc...) asparagine glycan.

The protein belongs to the COBRA family. In terms of tissue distribution, expressed in roots, stems, leaves, flowers and siliques.

This Arabidopsis thaliana (Mouse-ear cress) protein is COBRA-like protein 5 (COBL5).